Consider the following 541-residue polypeptide: GMP synthase [glutamine-hydrolyzing] (541 aa).

In terms of domain architecture, Glutamine amidotransferase type-1 spans 15–209; it reads TILTLDFGSQ…AVNICGCKQN (195 aa). Cysteine 91 acts as the Nucleophile in catalysis. Catalysis depends on residues histidine 183 and glutamate 185. The region spanning 210–416 is the GMPS ATP-PPase domain; it reads WTMARFVDQE…LGIAHEMVMR (207 aa). An ATP-binding site is contributed by 238-244; it reads SGGVDST. Residues arginine 311, aspartate 478, lysine 533, and glutamate 539 each contribute to the XMP site.

In terms of assembly, homodimer. Mg(2+) is required as a cofactor.

The protein localises to the cytoplasm. The protein resides in the cytosol. It carries out the reaction XMP + L-glutamine + ATP + H2O = GMP + L-glutamate + AMP + diphosphate + 2 H(+). The protein operates within purine metabolism; GMP biosynthesis; GMP from XMP (L-Gln route): step 1/1. In terms of biological role, catalyzes the conversion of xanthine monophosphate (XMP) to GMP in the presence of glutamine and ATP through an adenyl-XMP intermediate. The chain is GMP synthase [glutamine-hydrolyzing] (gua1) from Aspergillus oryzae (strain ATCC 42149 / RIB 40) (Yellow koji mold).